We begin with the raw amino-acid sequence, 236 residues long: Purine nucleoside phosphorylase DeoD-type (236 aa).

Residue His4 participates in a purine D-ribonucleoside binding. Residues Gly20, Arg24, Arg43, and Arg87–Thr90 each bind phosphate. A purine D-ribonucleoside is bound by residues Glu179 to Glu181 and Ser203 to Asp204. Asp204 (proton donor) is an active-site residue.

This sequence belongs to the PNP/UDP phosphorylase family. Homohexamer; trimer of homodimers.

It catalyses the reaction a purine D-ribonucleoside + phosphate = a purine nucleobase + alpha-D-ribose 1-phosphate. The enzyme catalyses a purine 2'-deoxy-D-ribonucleoside + phosphate = a purine nucleobase + 2-deoxy-alpha-D-ribose 1-phosphate. Functionally, catalyzes the reversible phosphorolytic breakdown of the N-glycosidic bond in the beta-(deoxy)ribonucleoside molecules, with the formation of the corresponding free purine bases and pentose-1-phosphate. The polypeptide is Purine nucleoside phosphorylase DeoD-type (Streptococcus pneumoniae serotype 2 (strain D39 / NCTC 7466)).